Reading from the N-terminus, the 241-residue chain is Small ribosomal subunit protein uS3 (241 aa).

Positions 39-107 constitute a KH type-2 domain; it reads IREILHKELK…DVVINIVEIR (69 aa). Positions 217-241 are disordered; sequence KRMAEGETGGGGDRGGRQRRDNAAV. A compositionally biased stretch (basic and acidic residues) spans 230–241; that stretch reads RGGRQRRDNAAV.

The protein belongs to the universal ribosomal protein uS3 family. Part of the 30S ribosomal subunit. Forms a tight complex with proteins S10 and S14.

Functionally, binds the lower part of the 30S subunit head. Binds mRNA in the 70S ribosome, positioning it for translation. This chain is Small ribosomal subunit protein uS3, found in Bradyrhizobium diazoefficiens (strain JCM 10833 / BCRC 13528 / IAM 13628 / NBRC 14792 / USDA 110).